The following is a 167-amino-acid chain: uncharacterized protein (167 aa).

Positions 1 to 23 (MKRLHKRFLLATFCALFTATLQA) are cleaved as a signal peptide. C39 and C77 are oxidised to a cystine.

Belongs to the fimbrial protein family.

The protein resides in the fimbrium. This is an uncharacterized protein from Escherichia coli (strain K12).